The sequence spans 318 residues: Aldehyde oxidoreductase FAD-binding subunit PaoB (318 aa).

Residues 1-223 (MKAFTYERVN…VAVTLPPPLG (223 aa)) enclose the FAD-binding PCMH-type domain. Residues 26 to 34 (KFIAGGTNL) and Thr108 each bind FAD. [4Fe-4S] cluster is bound by residues Cys119, Cys129, Cys138, and Cys157. Asp164, Ile213, and Lys230 together coordinate FAD.

Heterotrimer composed of PaoA, PaoB and PaoC. It depends on FAD as a cofactor. [4Fe-4S] cluster is required as a cofactor.

The protein resides in the periplasm. It catalyses the reaction an aldehyde + A + H2O = a carboxylate + AH2 + H(+). The complex requires PaoD for activity. Oxidizes aldehydes to the corresponding carboxylic acids with a preference for aromatic aldehydes. It might play a role in the detoxification of aldehydes to avoid cell damage. This is Aldehyde oxidoreductase FAD-binding subunit PaoB from Escherichia coli (strain K12).